We begin with the raw amino-acid sequence, 557 residues long: Aerobic glycerol-3-phosphate dehydrogenase (557 aa).

21–49 (DVVIIGGGITGAGIALDASQRGMKVALVE) is a binding site for FAD.

The protein belongs to the FAD-dependent glycerol-3-phosphate dehydrogenase family. FAD is required as a cofactor.

It localises to the cytoplasm. It catalyses the reaction a quinone + sn-glycerol 3-phosphate = dihydroxyacetone phosphate + a quinol. It functions in the pathway polyol metabolism; glycerol degradation via glycerol kinase pathway; glycerone phosphate from sn-glycerol 3-phosphate (aerobic route): step 1/1. In Staphylococcus haemolyticus (strain JCSC1435), this protein is Aerobic glycerol-3-phosphate dehydrogenase (glpD).